The primary structure comprises 287 residues: Thymidylate synthase (287 aa).

Residue Arg21 participates in dUMP binding. His51 is a binding site for (6R)-5,10-methylene-5,6,7,8-tetrahydrofolate. Residue 150–151 (RR) coordinates dUMP. Residue Cys170 is the Nucleophile of the active site. DUMP contacts are provided by residues 190–193 (RSGD), Asn201, and 231–233 (HIY). Residue Asp193 participates in (6R)-5,10-methylene-5,6,7,8-tetrahydrofolate binding. Residue Ala286 participates in (6R)-5,10-methylene-5,6,7,8-tetrahydrofolate binding.

Belongs to the thymidylate synthase family. Bacterial-type ThyA subfamily. Homodimer.

The protein resides in the cytoplasm. It catalyses the reaction dUMP + (6R)-5,10-methylene-5,6,7,8-tetrahydrofolate = 7,8-dihydrofolate + dTMP. Its pathway is pyrimidine metabolism; dTTP biosynthesis. Catalyzes the reductive methylation of 2'-deoxyuridine-5'-monophosphate (dUMP) to 2'-deoxythymidine-5'-monophosphate (dTMP) while utilizing 5,10-methylenetetrahydrofolate (mTHF) as the methyl donor and reductant in the reaction, yielding dihydrofolate (DHF) as a by-product. This enzymatic reaction provides an intracellular de novo source of dTMP, an essential precursor for DNA biosynthesis. The sequence is that of Thymidylate synthase from Mycoplasma pneumoniae (strain ATCC 29342 / M129 / Subtype 1) (Mycoplasmoides pneumoniae).